A 385-amino-acid polypeptide reads, in one-letter code: NADH-quinone oxidoreductase subunit H (385 aa).

Helical transmembrane passes span 14 to 34 (GLKL…LVWL), 80 to 100 (FLYY…FSAI), 130 to 150 (IGVG…TLLM), 172 to 192 (ISYE…YGTF), 219 to 239 (LPNW…SAAF), 280 to 300 (MMIA…IPYV), 325 to 345 (LIHF…FIWV), and 365 to 385 (MLPW…IASL).

This sequence belongs to the complex I subunit 1 family. In terms of assembly, NDH-1 is composed of 14 different subunits. Subunits NuoA, H, J, K, L, M, N constitute the membrane sector of the complex.

Its subcellular location is the cell inner membrane. The catalysed reaction is a quinone + NADH + 5 H(+)(in) = a quinol + NAD(+) + 4 H(+)(out). NDH-1 shuttles electrons from NADH, via FMN and iron-sulfur (Fe-S) centers, to quinones in the respiratory chain. The immediate electron acceptor for the enzyme in this species is believed to be ubiquinone. Couples the redox reaction to proton translocation (for every two electrons transferred, four hydrogen ions are translocated across the cytoplasmic membrane), and thus conserves the redox energy in a proton gradient. This subunit may bind ubiquinone. The polypeptide is NADH-quinone oxidoreductase subunit H (Bdellovibrio bacteriovorus (strain ATCC 15356 / DSM 50701 / NCIMB 9529 / HD100)).